A 291-amino-acid polypeptide reads, in one-letter code: Deaminated glutathione amidase (291 aa).

Residues 13–268 (KRIGLGQITS…NDIAFVDIDL (256 aa)) enclose the CN hydrolase domain. Residue E52 is the Proton acceptor of the active site. The active-site Proton donor is K130. Catalysis depends on C172, which acts as the Nucleophile.

Belongs to the carbon-nitrogen hydrolase superfamily. NIT1/NIT2 family.

The enzyme catalyses N-(4-oxoglutaryl)-L-cysteinylglycine + H2O = L-cysteinylglycine + 2-oxoglutarate. Catalyzes the hydrolysis of the amide bond in N-(4-oxoglutarate)-L-cysteinylglycine (deaminated glutathione), a metabolite repair reaction to dispose of the harmful deaminated glutathione. The sequence is that of Deaminated glutathione amidase (nit1-1) from Dictyostelium discoideum (Social amoeba).